A 207-amino-acid chain; its full sequence is GTP cyclohydrolase-2 (207 aa).

Arg49–Glu53 contacts GTP. Cys54, Cys65, and Cys67 together coordinate Zn(2+). Residues Gln70, Glu92–Arg94, and Thr114 each bind GTP. Asp126 (proton acceptor) is an active-site residue. Arg128 acts as the Nucleophile in catalysis. Positions 149 and 154 each coordinate GTP.

This sequence belongs to the GTP cyclohydrolase II family. Requires Zn(2+) as cofactor.

It carries out the reaction GTP + 4 H2O = 2,5-diamino-6-hydroxy-4-(5-phosphoribosylamino)-pyrimidine + formate + 2 phosphate + 3 H(+). It participates in cofactor biosynthesis; riboflavin biosynthesis; 5-amino-6-(D-ribitylamino)uracil from GTP: step 1/4. Catalyzes the conversion of GTP to 2,5-diamino-6-ribosylamino-4(3H)-pyrimidinone 5'-phosphate (DARP), formate and pyrophosphate. This chain is GTP cyclohydrolase-2, found in Hahella chejuensis (strain KCTC 2396).